Reading from the N-terminus, the 324-residue chain is Zinc finger C2HC domain-containing protein 1A (324 aa).

The segment at 15-44 (ELLPCKICGRTFFPVALKKHGPICKKTATK) adopts a C2HC/C3H-type 1 zinc-finger fold. 4 residues coordinate Zn(2+): cysteine 19, cysteine 22, histidine 34, and cysteine 38. Residues 43-83 (TKKRKTFDSSRQRAEGTDIPTVKPLKPRPEPPKKPSNWRRK) form a disordered region. A compositionally biased stretch (basic and acidic residues) spans 48 to 58 (TFDSSRQRAEG). The C2HC/C3H-type 2 zinc finger occupies 118–147 (DYIQCPYCQRRFNENAADRHINFCKEQAAR). Zn(2+) is bound by residues cysteine 122, cysteine 125, histidine 137, and cysteine 141. Disordered regions lie at residues 150–224 (NKGK…LSPS) and 236–259 (NVKPRNSTPPSLARNPAPGVLTNK). Composition is skewed to low complexity over residues 176–187 (SNSPGTASSGSS) and 196–215 (GKTVVGVPSGKVSSSSSSLG). Phosphoserine is present on serine 222. Position 243 is a phosphothreonine (threonine 243). Phosphoserine is present on serine 291.

Belongs to the ZC2HC1 family. The cofactor is Zn(2+).

The sequence is that of Zinc finger C2HC domain-containing protein 1A (ZC2HC1A) from Pongo abelii (Sumatran orangutan).